Reading from the N-terminus, the 474-residue chain is tRNA-2-methylthio-N(6)-dimethylallyladenosine synthase (474 aa).

Residues 3 to 120 form the MTTase N-terminal domain; the sequence is KKLLIKTWGC…LPQMIKDSQS (118 aa). [4Fe-4S] cluster contacts are provided by Cys12, Cys49, Cys83, Cys157, Cys161, and Cys164. The region spanning 143-375 is the Radical SAM core domain; that stretch reads RADGVTAFVS…QQQINTQAMR (233 aa). One can recognise a TRAM domain in the interval 378–441; that stretch reads RQMLNTEQRI…TNSLRGELVR (64 aa).

It belongs to the methylthiotransferase family. MiaB subfamily. In terms of assembly, monomer. [4Fe-4S] cluster serves as cofactor.

The protein localises to the cytoplasm. It carries out the reaction N(6)-dimethylallyladenosine(37) in tRNA + (sulfur carrier)-SH + AH2 + 2 S-adenosyl-L-methionine = 2-methylsulfanyl-N(6)-dimethylallyladenosine(37) in tRNA + (sulfur carrier)-H + 5'-deoxyadenosine + L-methionine + A + S-adenosyl-L-homocysteine + 2 H(+). Its function is as follows. Catalyzes the methylthiolation of N6-(dimethylallyl)adenosine (i(6)A), leading to the formation of 2-methylthio-N6-(dimethylallyl)adenosine (ms(2)i(6)A) at position 37 in tRNAs that read codons beginning with uridine. In Photobacterium profundum (strain SS9), this protein is tRNA-2-methylthio-N(6)-dimethylallyladenosine synthase.